A 286-amino-acid chain; its full sequence is CLA biosynthesis dehydrogenase/reductase (286 aa).

The NAD(+) site is built by aspartate 37, aspartate 63, valine 64, asparagine 90, tyrosine 156, and lysine 160. Catalysis depends on tyrosine 156, which acts as the Proton acceptor.

The protein belongs to the short-chain dehydrogenases/reductases (SDR) family.

It localises to the cytoplasm. It carries out the reaction (10S)-hydroxy-(12Z)-octadecenoate + NAD(+) = 10-oxo-(12Z)-octadecenoate + NADH + H(+). The enzyme catalyses 10-oxo-(11E)-octadecenoate + NADH + H(+) = 10-hydroxy-(11E)-octadecenoate + NAD(+). It catalyses the reaction 10-oxooctadecanoate + NADH + H(+) = 10-hydroxyoctadecanoate + NAD(+). It participates in lipid metabolism; fatty acid metabolism. Functionally, is involved in a saturation metabolic pathway of polyunsaturated fatty acids, that detoxifies unsaturated fatty acids and generates hydroxy fatty acids, oxo fatty acids, conjugated fatty acids such as conjugated linoleic acids (CLAs), and partially saturated trans-fatty acids as intermediates. CLA-DH catalyzes the dehydrogenation/reduction steps in the production of 10-oxo-(12Z)-octadecenoate, 10-hydroxy-(11E)-octadecenoate and 10-hydroxyoctadecanoate during linoleate metabolism. As part of the gut microbiome, this enzyme modifies host fatty acid composition and is expected to improve human health by altering lipid metabolism related to the onset of metabolic syndrome. This is CLA biosynthesis dehydrogenase/reductase from Lactiplantibacillus plantarum (Lactobacillus plantarum).